Reading from the N-terminus, the 353-residue chain is Feruloyl esterase B (353 aa).

The signal sequence occupies residues 1 to 18 (MAIPLVLVLAWLLPVVLA). Positions 19–291 (ASLTQVNNFG…VSVVLDWFGI (273 aa)) are catalytic. S136 functions as the Charge relay system in the catalytic mechanism. N-linked (GlcNAc...) asparagine glycans are attached at residues N179 and N246. One can recognise a CBM1 domain in the interval 317–353 (CTAAHWAQCGGIGYSGCTACASPYTCQKANDYYSQCL).

Belongs to the carbohydrate esterase 1 (CE1) family. Feruloyl esterase type B subfamily. Post-translationally, glycosylated.

It localises to the secreted. It catalyses the reaction feruloyl-polysaccharide + H2O = ferulate + polysaccharide.. With respect to regulation, inhibited by the specific serine esterase inhibitor AEBSF. Functionally, involved in degradation of plant cell walls. Hydrolyzes the feruloyl-arabinose ester bond in arabinoxylans, and the feruloyl-galactose and feruloyl-arabinose ester bonds in pectin. Binds strongly to cellulose. The protein is Feruloyl esterase B (FAEB) of Talaromyces funiculosus (Fruitlet core rot fungus).